A 432-amino-acid polypeptide reads, in one-letter code: Ciliated left-right organizer protein containing ZP-N domains homolog (432 aa).

In terms of tissue distribution, expressed specifically by cells of the ciliated left-right organizer.

In Danio rerio (Zebrafish), this protein is Ciliated left-right organizer protein containing ZP-N domains homolog (ciroz).